A 1661-amino-acid polypeptide reads, in one-letter code: Pentafunctional AROM polypeptide (1661 aa).

Residues 1–388 form a 3-dehydroquinate synthase region; it reads MATNGVKAEP…YEKKASSVVD (388 aa). NAD(+)-binding positions include 50 to 52, 87 to 90, 118 to 120, and D123; these read DTN, ETSK, and GGV. R134 serves as a coordination point for 7-phospho-2-dehydro-3-deoxy-D-arabino-heptonate. Position 143 to 144 (143 to 144) interacts with NAD(+); that stretch reads TT. 7-phospho-2-dehydro-3-deoxy-D-arabino-heptonate-binding residues include D150 and K156. K165 contributes to the NAD(+) binding site. N166 lines the 7-phospho-2-dehydro-3-deoxy-D-arabino-heptonate pocket. Residues 183-186 and N194 contribute to the NAD(+) site; that span reads FLET. E198 lines the Zn(2+) pocket. Residues 198–201 and K254 contribute to the 7-phospho-2-dehydro-3-deoxy-D-arabino-heptonate site; that span reads EVVK. E264 (proton acceptor; for 3-dehydroquinate synthase activity) is an active-site residue. 7-phospho-2-dehydro-3-deoxy-D-arabino-heptonate-binding positions include 268-272 and H275; that span reads RNLLN. Residue H275 coordinates Zn(2+). Residue H279 is the Proton acceptor; for 3-dehydroquinate synthase activity of the active site. The 7-phospho-2-dehydro-3-deoxy-D-arabino-heptonate site is built by H291 and K360. H291 contacts Zn(2+). The interval 401–850 is EPSP synthase; sequence VHPGIPSDLN…WDILNQQFKA (450 aa). C832 (for EPSP synthase activity) is an active-site residue. A shikimate kinase region spans residues 872 to 1064; that stretch reads QKSIFIIGMR…KKKKQSFFVC (193 aa). 879-886 lines the ATP pocket; that stretch reads GMRGAGKT. Residues 1065–1285 form a 3-dehydroquinase region; it reads LSAPNLEPCA…TAPGQLSAAD (221 aa). H1188 (proton acceptor; for 3-dehydroquinate dehydratase activity) is an active-site residue. K1216 (schiff-base intermediate with substrate; for 3-dehydroquinate dehydratase activity) is an active-site residue. The interval 1298-1661 is shikimate dehydrogenase; it reads TKKFCIFGSP…LTYSWSLGDW (364 aa).

In the N-terminal section; belongs to the sugar phosphate cyclases superfamily. Dehydroquinate synthase family. It in the 2nd section; belongs to the EPSP synthase family. This sequence in the 3rd section; belongs to the shikimate kinase family. The protein in the 4th section; belongs to the type-I 3-dehydroquinase family. In the C-terminal section; belongs to the shikimate dehydrogenase family. In terms of assembly, homodimer. It depends on Zn(2+) as a cofactor.

The protein localises to the cytoplasm. It carries out the reaction 7-phospho-2-dehydro-3-deoxy-D-arabino-heptonate = 3-dehydroquinate + phosphate. It catalyses the reaction 3-dehydroquinate = 3-dehydroshikimate + H2O. The catalysed reaction is shikimate + NADP(+) = 3-dehydroshikimate + NADPH + H(+). The enzyme catalyses shikimate + ATP = 3-phosphoshikimate + ADP + H(+). It carries out the reaction 3-phosphoshikimate + phosphoenolpyruvate = 5-O-(1-carboxyvinyl)-3-phosphoshikimate + phosphate. It participates in metabolic intermediate biosynthesis; chorismate biosynthesis; chorismate from D-erythrose 4-phosphate and phosphoenolpyruvate: step 2/7. It functions in the pathway metabolic intermediate biosynthesis; chorismate biosynthesis; chorismate from D-erythrose 4-phosphate and phosphoenolpyruvate: step 3/7. The protein operates within metabolic intermediate biosynthesis; chorismate biosynthesis; chorismate from D-erythrose 4-phosphate and phosphoenolpyruvate: step 4/7. Its pathway is metabolic intermediate biosynthesis; chorismate biosynthesis; chorismate from D-erythrose 4-phosphate and phosphoenolpyruvate: step 5/7. It participates in metabolic intermediate biosynthesis; chorismate biosynthesis; chorismate from D-erythrose 4-phosphate and phosphoenolpyruvate: step 6/7. The AROM polypeptide catalyzes 5 consecutive enzymatic reactions in prechorismate polyaromatic amino acid biosynthesis. In Phaeosphaeria nodorum (strain SN15 / ATCC MYA-4574 / FGSC 10173) (Glume blotch fungus), this protein is Pentafunctional AROM polypeptide.